The primary structure comprises 313 residues: Ribosomal RNA small subunit methyltransferase H (313 aa).

Residues 35-37, Asp55, Phe79, Asp100, and Gln107 each bind S-adenosyl-L-methionine; that span reads GGH.

Belongs to the methyltransferase superfamily. RsmH family.

The protein localises to the cytoplasm. It carries out the reaction cytidine(1402) in 16S rRNA + S-adenosyl-L-methionine = N(4)-methylcytidine(1402) in 16S rRNA + S-adenosyl-L-homocysteine + H(+). In terms of biological role, specifically methylates the N4 position of cytidine in position 1402 (C1402) of 16S rRNA. In Burkholderia ambifaria (strain ATCC BAA-244 / DSM 16087 / CCUG 44356 / LMG 19182 / AMMD) (Burkholderia cepacia (strain AMMD)), this protein is Ribosomal RNA small subunit methyltransferase H.